The chain runs to 196 residues: MYEYINGLITNITPSYIVIASRSGVGYRLYSANPYRFEENVESHVYVQQIVRENDISLYGFIDADEKALFNKLLNVSGIGPKSALAILANGDAEGLISAVENDNVAYLTQFPGVGKKTAQQIVLDLKGKLDELASKTGMVDSSSNPEQSQALDDALEALLALGYTAKDVKAVAQIIGRNSDTTDGYIRSALKLLVK.

Residues 1–62 are domain I; sequence MYEYINGLIT…ENDISLYGFI (62 aa). Residues 63-141 are domain II; the sequence is DADEKALFNK…ELASKTGMVD (79 aa). The flexible linker stretch occupies residues 142-148; sequence SSSNPEQ. Residues 148 to 196 form a domain III region; it reads QSQALDDALEALLALGYTAKDVKAVAQIIGRNSDTTDGYIRSALKLLVK.

It belongs to the RuvA family. As to quaternary structure, homotetramer. Forms an RuvA(8)-RuvB(12)-Holliday junction (HJ) complex. HJ DNA is sandwiched between 2 RuvA tetramers; dsDNA enters through RuvA and exits via RuvB. An RuvB hexamer assembles on each DNA strand where it exits the tetramer. Each RuvB hexamer is contacted by two RuvA subunits (via domain III) on 2 adjacent RuvB subunits; this complex drives branch migration. In the full resolvosome a probable DNA-RuvA(4)-RuvB(12)-RuvC(2) complex forms which resolves the HJ.

Its subcellular location is the cytoplasm. Functionally, the RuvA-RuvB-RuvC complex processes Holliday junction (HJ) DNA during genetic recombination and DNA repair, while the RuvA-RuvB complex plays an important role in the rescue of blocked DNA replication forks via replication fork reversal (RFR). RuvA specifically binds to HJ cruciform DNA, conferring on it an open structure. The RuvB hexamer acts as an ATP-dependent pump, pulling dsDNA into and through the RuvAB complex. HJ branch migration allows RuvC to scan DNA until it finds its consensus sequence, where it cleaves and resolves the cruciform DNA. This Leuconostoc mesenteroides subsp. mesenteroides (strain ATCC 8293 / DSM 20343 / BCRC 11652 / CCM 1803 / JCM 6124 / NCDO 523 / NBRC 100496 / NCIMB 8023 / NCTC 12954 / NRRL B-1118 / 37Y) protein is Holliday junction branch migration complex subunit RuvA.